A 511-amino-acid polypeptide reads, in one-letter code: Sulfate adenylyltransferase (511 aa).

The N-terminal stretch occupies residues 1–167; that stretch reads MPAPHGGILQ…LEAIQLPQHY (167 aa). The segment at 168 to 393 is catalytic; sequence DYPGLRKTPA…LRESNPPRPK (226 aa). Glutamine 195 is a sulfate binding site. Residues 195 to 198 and 289 to 292 contribute to the ATP site; these read QTRN and GRDH. Catalysis depends on residues threonine 196, arginine 197, and asparagine 198. Arginine 197 lines the sulfate pocket. Alanine 293 serves as a coordination point for sulfate. Position 331 (valine 331) interacts with ATP. A required for oligomerization; adenylyl-sulfate kinase-like region spans residues 394-511; that stretch reads QGFSIVLGNS…FLEDNGFFVF (118 aa).

It belongs to the sulfate adenylyltransferase family. Homohexamer. Dimer of trimers.

It is found in the cytoplasm. The enzyme catalyses sulfate + ATP + H(+) = adenosine 5'-phosphosulfate + diphosphate. The protein operates within sulfur metabolism; hydrogen sulfide biosynthesis; sulfite from sulfate: step 1/3. Functionally, catalyzes the first intracellular reaction of sulfate assimilation, forming adenosine-5'-phosphosulfate (APS) from inorganic sulfate and ATP. Plays an important role in sulfate activation as a component of the biosynthesis pathway of sulfur-containing amino acids. The chain is Sulfate adenylyltransferase from Saccharomyces cerevisiae (strain ATCC 204508 / S288c) (Baker's yeast).